Reading from the N-terminus, the 244-residue chain is NAD-dependent protein deacetylase (244 aa).

The 244-residue stretch at 1-244 (MTGEQLAHWI…LSAVQRAVMP (244 aa)) folds into the Deacetylase sirtuin-type domain. NAD(+) is bound by residues A22, T26, F33, R34, Q103, I105, D106, and H121. F33 lines the nicotinamide pocket. I105 and D106 together coordinate nicotinamide. The active-site Proton acceptor is the H121. Zn(2+)-binding residues include C129, C132, C150, and C152. NAD(+) contacts are provided by T190, S191, N213, and L231.

Belongs to the sirtuin family. Class U subfamily. Zn(2+) serves as cofactor.

The protein resides in the cytoplasm. It catalyses the reaction N(6)-acetyl-L-lysyl-[protein] + NAD(+) + H2O = 2''-O-acetyl-ADP-D-ribose + nicotinamide + L-lysyl-[protein]. In terms of biological role, NAD-dependent protein deacetylase which modulates the activities of several enzymes which are inactive in their acetylated form. This is NAD-dependent protein deacetylase from Cutibacterium acnes (strain DSM 16379 / KPA171202) (Propionibacterium acnes).